The primary structure comprises 393 residues: Envelope glycoprotein M (393 aa).

Residues 1 to 14 (MCGPRNAEAVSWRS) are Intravirion-facing. The chain crosses the membrane as a helical span at residues 15–35 (WLIEVCGFALAALTLVLTLIF). The Virion surface portion of the chain corresponds to 36–83 (ASLPEMGFPCFYATVADYDTLNDTSGGVWTRQPLVAPALFLETPTVTS). Residues 84-104 (FFGFTATVLLAHALYAVAGAV) form a helical membrane-spanning segment. Over 105–130 (VLRREAGRLAFQPSVVLYAASTVAAP) the chain is Intravirion. The helical transmembrane segment at 131-151 (GTLMLGALCAWTLQAVVLLMA) threads the bilayer. Over 152 to 154 (HKQ) the chain is Virion surface. Residues 155 to 175 (AGLAAAAYITHFVFLALFGAC) traverse the membrane as a helical segment. Residues 176-207 (HACKGTGDVRAALAASPPLRRVAVHARAVVTN) are Intravirion-facing. A helical membrane pass occupies residues 208–228 (VVLGAVGLGAAVVGLMLGVLL). The Virion surface segment spans residues 229–241 (ANSFHISLWKTAE). A helical transmembrane segment spans residues 242-262 (AALAVFTLLALALMVFVEVVV). Residues 263–264 (SG) are Intravirion-facing. Residues 265-285 (YVQVLPTPAFCVLVASAAFGV) traverse the membrane as a helical segment. At 286-303 (SAHRYFAKFSEALGETHG) the chain is on the virion surface side. The chain crosses the membrane as a helical span at residues 304–324 (VVIGTRAVLAVLSLIALAMIV). Residues 325–393 (VRLVRACIAH…EVVYENLGFE (69 aa)) are Intravirion-facing.

The protein belongs to the herpesviridae glycoprotein M family. Interacts (via N-terminus) with gN (via N-terminus). The gM-gN heterodimer forms the gCII complex.

It localises to the virion membrane. The protein localises to the host Golgi apparatus. The protein resides in the host trans-Golgi network. Its subcellular location is the host endosome membrane. It is found in the host nucleus inner membrane. Functionally, envelope glycoprotein important for virion assembly and egress. Plays a role in the correct incorporation of gH-gL into virion membrane. Directs the glycoprotein N (gN) to the host trans-Golgi network. This is Envelope glycoprotein M from Suid herpesvirus 1 (SuHV-1).